Consider the following 400-residue polypeptide: Nicotinate phosphoribosyltransferase (400 aa).

H220 is subject to Phosphohistidine; by autocatalysis.

The protein belongs to the NAPRTase family. Post-translationally, transiently phosphorylated on a His residue during the reaction cycle. Phosphorylation strongly increases the affinity for substrates and increases the rate of nicotinate D-ribonucleotide production. Dephosphorylation regenerates the low-affinity form of the enzyme, leading to product release.

The enzyme catalyses nicotinate + 5-phospho-alpha-D-ribose 1-diphosphate + ATP + H2O = nicotinate beta-D-ribonucleotide + ADP + phosphate + diphosphate. The protein operates within cofactor biosynthesis; NAD(+) biosynthesis; nicotinate D-ribonucleotide from nicotinate: step 1/1. Catalyzes the synthesis of beta-nicotinate D-ribonucleotide from nicotinate and 5-phospho-D-ribose 1-phosphate at the expense of ATP. In Salmonella newport (strain SL254), this protein is Nicotinate phosphoribosyltransferase.